The following is a 301-amino-acid chain: Probable tRNA pseudouridine synthase B (301 aa).

Residue D54 is the Nucleophile of the active site. One can recognise a PUA domain in the interval 227–301; that stretch reads LPRLTIADSA…VVVALERVLV (75 aa).

This sequence belongs to the pseudouridine synthase TruB family. Type 2 subfamily.

It catalyses the reaction uridine(55) in tRNA = pseudouridine(55) in tRNA. In terms of biological role, could be responsible for synthesis of pseudouridine from uracil-55 in the psi GC loop of transfer RNAs. In Halobacterium salinarum (strain ATCC 29341 / DSM 671 / R1), this protein is Probable tRNA pseudouridine synthase B.